Here is a 273-residue protein sequence, read N- to C-terminus: 2,3,4,5-tetrahydropyridine-2,6-dicarboxylate N-succinyltransferase (273 aa).

Positions 106 and 143 each coordinate substrate.

It belongs to the transferase hexapeptide repeat family. As to quaternary structure, homotrimer.

It localises to the cytoplasm. It catalyses the reaction (S)-2,3,4,5-tetrahydrodipicolinate + succinyl-CoA + H2O = (S)-2-succinylamino-6-oxoheptanedioate + CoA. Its pathway is amino-acid biosynthesis; L-lysine biosynthesis via DAP pathway; LL-2,6-diaminopimelate from (S)-tetrahydrodipicolinate (succinylase route): step 1/3. In Wolbachia pipientis wMel, this protein is 2,3,4,5-tetrahydropyridine-2,6-dicarboxylate N-succinyltransferase.